A 267-amino-acid polypeptide reads, in one-letter code: MSDILKQICDVKVQEVAAAQKRMPFADMRRDAESRVLTRDFVGALRAKIAAGQAGVIAEIKKASPSKGVIREDFIPADIAQSYADGDGKGVSAACLSVLTDKQFFQGSVDYLKQARASCHLPVLRKDFMVDPYQIYESRAMGADCVLLIAACLDDAQMAEMEQIAHSLDMAVLVEVHDGAELDRALRLKTPLVGINNRNLRSFEVSIQTTLDLQKNVPADRLLVTESGIGSREDVKAMRDAGIHSFLVGEAFMRAKEPGEALAKLFA.

The protein belongs to the TrpC family.

It carries out the reaction 1-(2-carboxyphenylamino)-1-deoxy-D-ribulose 5-phosphate + H(+) = (1S,2R)-1-C-(indol-3-yl)glycerol 3-phosphate + CO2 + H2O. It functions in the pathway amino-acid biosynthesis; L-tryptophan biosynthesis; L-tryptophan from chorismate: step 4/5. This Delftia acidovorans (strain DSM 14801 / SPH-1) protein is Indole-3-glycerol phosphate synthase.